We begin with the raw amino-acid sequence, 536 residues long: MFS-type efflux pump MFS1 (536 aa).

3 helical membrane passes run 30-50 (VTGL…LLVA), 80-100 (YLLT…FFPV), and 102-122 (WVFL…GAAP). An N-linked (GlcNAc...) asparagine glycan is attached at asparagine 123. 3 helical membrane-spanning segments follow: residues 133–153 (VAGI…AYSI), 163–183 (GAIG…GGAF), and 191–211 (WCFY…LIFL). Residue asparagine 221 is glycosylated (N-linked (GlcNAc...) asparagine). 8 helical membrane passes run 234–254 (IGTA…QWGG), 264–284 (IIAL…FQIR), 306–326 (FFLF…PIWF), 342–362 (IPMV…VTAI), 366–386 (APLY…LTTF), 400–420 (IIFG…AQAV), 426–446 (VAVG…LFVS), and 503–523 (TWYV…GMEW).

This sequence belongs to the major facilitator superfamily. TCR/Tet family.

It is found in the cell membrane. Its function is as follows. MFS-type efflux pump involved in the modulation susceptibility to azoles, including fluconazole, itraconazole, miconazole and voriconazole. Also confers increased resistance chloramphenicol and thiamphenicol, suggesting that it acts as a pleiotropic drug transporter with a broad substrate spectrum. Finally, increases the tolerance to cycloheximide when expressed in S.cerevisiae, but not in dermatophyte species. This Arthroderma benhamiae (strain ATCC MYA-4681 / CBS 112371) (Trichophyton mentagrophytes) protein is MFS-type efflux pump MFS1.